The primary structure comprises 125 residues: Small ribosomal subunit protein uS12 (125 aa).

Aspartate 89 carries the post-translational modification 3-methylthioaspartic acid.

The protein belongs to the universal ribosomal protein uS12 family. In terms of assembly, part of the 30S ribosomal subunit. Contacts proteins S8 and S17. May interact with IF1 in the 30S initiation complex.

With S4 and S5 plays an important role in translational accuracy. In terms of biological role, interacts with and stabilizes bases of the 16S rRNA that are involved in tRNA selection in the A site and with the mRNA backbone. Located at the interface of the 30S and 50S subunits, it traverses the body of the 30S subunit contacting proteins on the other side and probably holding the rRNA structure together. The combined cluster of proteins S8, S12 and S17 appears to hold together the shoulder and platform of the 30S subunit. This chain is Small ribosomal subunit protein uS12, found in Clostridium acetobutylicum (strain ATCC 824 / DSM 792 / JCM 1419 / IAM 19013 / LMG 5710 / NBRC 13948 / NRRL B-527 / VKM B-1787 / 2291 / W).